The chain runs to 331 residues: Phosphoribosylformylglycinamidine cyclo-ligase (331 aa).

The protein belongs to the AIR synthase family.

The protein localises to the cytoplasm. The catalysed reaction is 2-formamido-N(1)-(5-O-phospho-beta-D-ribosyl)acetamidine + ATP = 5-amino-1-(5-phospho-beta-D-ribosyl)imidazole + ADP + phosphate + H(+). The protein operates within purine metabolism; IMP biosynthesis via de novo pathway; 5-amino-1-(5-phospho-D-ribosyl)imidazole from N(2)-formyl-N(1)-(5-phospho-D-ribosyl)glycinamide: step 2/2. In Clostridium botulinum (strain Langeland / NCTC 10281 / Type F), this protein is Phosphoribosylformylglycinamidine cyclo-ligase.